The sequence spans 284 residues: Syntaxin-like protein psy1 (284 aa).

A coiled-coil region spans residues 23-57; the sequence is EEIDHIRDAIRQIEDNVGRIEMLHQQSLQEIDEAN. The t-SNARE coiled-coil homology domain occupies 181–243; that stretch reads LREVQERHAD…GEGTQHMDRA (63 aa). Residues 260–280 form a helical; Anchor for type IV membrane protein membrane-spanning segment; it reads ICVVIICVIVAVLCGVLIPVL.

Belongs to the syntaxin family.

The protein resides in the cell membrane. Its subcellular location is the prospore membrane. In Schizosaccharomyces pombe (strain 972 / ATCC 24843) (Fission yeast), this protein is Syntaxin-like protein psy1 (psy1).